A 164-amino-acid polypeptide reads, in one-letter code: Reticulon-like protein B22 (164 aa).

The 164-residue stretch at 1–164 (MGEMGKAMGL…ILEQEAHSDT (164 aa)) folds into the Reticulon domain. Transmembrane regions (helical) follow at residues 30-50 (SLFSDVFIVLLCSLAILGLLF) and 117-137 (LISGVTVAYAGLCLFCLSMLC).

It is found in the endoplasmic reticulum membrane. This chain is Reticulon-like protein B22 (RTNLB22), found in Arabidopsis thaliana (Mouse-ear cress).